Consider the following 107-residue polypeptide: Homeobox protein HD-3 (107 aa).

The segment at residues 6–65 (SKAPRTRMTAGQTRVLMSFFKDNPFPSTTAREKLSKVLGVGPRTVQIWFQNQRQKARGQA) is a DNA-binding region (homeobox).

It is found in the nucleus. The protein is Homeobox protein HD-3 (HD-3) of Encephalitozoon cuniculi (strain GB-M1) (Microsporidian parasite).